Consider the following 1225-residue polypeptide: ATP-dependent helicase/nuclease subunit A (1225 aa).

Positions Ala11–Arg478 constitute a UvrD-like helicase ATP-binding domain. An ATP-binding site is contributed by Ala32–Thr39. A UvrD-like helicase C-terminal domain is found at Lys479–Gly790. Basic and acidic residues predominate over residues Glu999–Glu1014. Residues Glu999–Ser1018 are disordered.

Belongs to the helicase family. AddA subfamily. As to quaternary structure, heterodimer of AddA and AddB/RexB. The cofactor is Mg(2+).

The catalysed reaction is Couples ATP hydrolysis with the unwinding of duplex DNA by translocating in the 3'-5' direction.. The enzyme catalyses ATP + H2O = ADP + phosphate + H(+). Functionally, the heterodimer acts as both an ATP-dependent DNA helicase and an ATP-dependent, dual-direction single-stranded exonuclease. Recognizes the chi site generating a DNA molecule suitable for the initiation of homologous recombination. The AddA nuclease domain is required for chi fragment generation; this subunit has the helicase and 3' -&gt; 5' nuclease activities. The chain is ATP-dependent helicase/nuclease subunit A from Staphylococcus haemolyticus (strain JCSC1435).